Consider the following 438-residue polypeptide: GTPase Obg (438 aa).

Residues Ser-2–Leu-160 form the Obg domain. The disordered stretch occupies residues Asn-128–Pro-147. In terms of domain architecture, OBG-type G spans Ala-161 to Glu-339. GTP is bound by residues Gly-167–Ser-174, Phe-192–Val-196, Asp-214–Gly-217, Asn-284–Asp-287, and Ser-320–Val-322. Mg(2+)-binding residues include Ser-174 and Thr-194. The 79-residue stretch at Gly-360–Glu-438 folds into the OCT domain.

This sequence belongs to the TRAFAC class OBG-HflX-like GTPase superfamily. OBG GTPase family. As to quaternary structure, monomer. Mg(2+) is required as a cofactor.

The protein resides in the cytoplasm. An essential GTPase which binds GTP, GDP and possibly (p)ppGpp with moderate affinity, with high nucleotide exchange rates and a fairly low GTP hydrolysis rate. Plays a role in control of the cell cycle, stress response, ribosome biogenesis and in those bacteria that undergo differentiation, in morphogenesis control. The sequence is that of GTPase Obg from Enterococcus faecalis (strain ATCC 700802 / V583).